The primary structure comprises 183 residues: uncharacterized protein (183 aa).

Belongs to the isochorismatase family.

This is an uncharacterized protein from Bacillus subtilis (strain 168).